An 80-amino-acid polypeptide reads, in one-letter code: Peptide LaIT2 (80 aa).

A signal peptide spans 1 to 21; that stretch reads MAKHLIVMFLVIMVISSLVDC. The BetaSPN-type CS-alpha/beta domain occupies 49-80; that stretch reads QYGCPIISNMCEDHCRRKKMEGQCDLLDCVCS. Disulfide bonds link Cys-52–Cys-72, Cys-59–Cys-77, and Cys-63–Cys-79.

The protein belongs to the long chain scorpion toxin family. Class 2 subfamily. As to expression, expressed by the venom gland.

The protein resides in the secreted. Functionally, dual-function toxin that acts both as an insecticidal and an antimicrobial peptide. May inhibit voltage-gated potassium channels (Kv). This amphipathic peptide causes significant antimicrobial activity against E.coli (MIC=7 uM) but does not show any activity against S.aureus even at high concentration. In vivo, causes paralysis or death to crickets. The polypeptide is Peptide LaIT2 (Liocheles australasiae (Dwarf wood scorpion)).